Consider the following 231-residue polypeptide: Biosynthetic peptidoglycan transglycosylase (231 aa).

The helical transmembrane segment at 12–34 (AAVLAGLALLLVALAVSYRWVPP) threads the bilayer.

This sequence belongs to the glycosyltransferase 51 family.

It is found in the cell inner membrane. The enzyme catalyses [GlcNAc-(1-&gt;4)-Mur2Ac(oyl-L-Ala-gamma-D-Glu-L-Lys-D-Ala-D-Ala)](n)-di-trans,octa-cis-undecaprenyl diphosphate + beta-D-GlcNAc-(1-&gt;4)-Mur2Ac(oyl-L-Ala-gamma-D-Glu-L-Lys-D-Ala-D-Ala)-di-trans,octa-cis-undecaprenyl diphosphate = [GlcNAc-(1-&gt;4)-Mur2Ac(oyl-L-Ala-gamma-D-Glu-L-Lys-D-Ala-D-Ala)](n+1)-di-trans,octa-cis-undecaprenyl diphosphate + di-trans,octa-cis-undecaprenyl diphosphate + H(+). The protein operates within cell wall biogenesis; peptidoglycan biosynthesis. Functionally, peptidoglycan polymerase that catalyzes glycan chain elongation from lipid-linked precursors. This is Biosynthetic peptidoglycan transglycosylase from Rhodospirillum centenum (strain ATCC 51521 / SW).